The sequence spans 250 residues: Probable transcriptional regulatory protein Cphamn1_0542 (250 aa).

Belongs to the TACO1 family.

The protein localises to the cytoplasm. This chain is Probable transcriptional regulatory protein Cphamn1_0542, found in Chlorobium phaeobacteroides (strain BS1).